Reading from the N-terminus, the 713-residue chain is Segment polarity protein dishevelled homolog DVL-3 (713 aa).

Residues 1-82 form the DIX domain; sequence MGETKVIYHL…RVVCWLVSAD (82 aa). Composition is skewed to polar residues over residues 87–98 and 118–127; these read DAGSVCADNQSD and HPNTRGSQEN. The tract at residues 87 to 235 is disordered; it reads DAGSVCADNQ…PRIERSSSFS (149 aa). The span at 140 to 155 shows a compositional bias: basic and acidic residues; sequence AHRERPRRKETPEHAT. Residues 173–189 show a composition bias toward low complexity; it reads ESSSTLMSSELDSTSFF. The span at 199–210 shows a compositional bias: polar residues; the sequence is RFSNSTEQSSAS. The segment covering 212 to 225 has biased composition (basic residues); the sequence is LMRRHKRRRRKPKA. One can recognise a PDZ domain in the interval 248–333; that stretch reads TVTLNMEKYN…KPGPITLTVA (86 aa). One can recognise a DEP domain in the interval 421-495; sequence PESGLEVRDR…SEQCYYIFGD (75 aa). Polar residues predominate over residues 508-518; the sequence is HDGSSGTSDQD. Disordered regions lie at residues 508–527 and 545–652; these read HDGS…PHPG and YSPH…GPPG. A compositionally biased stretch (low complexity) spans 564-579; the sequence is GSQHSEGSRSSGSNRS. Composition is skewed to basic and acidic residues over residues 580–593 and 602–618; these read STEK…KGGD and ESDH…RAAS. Residues 629-646 show a composition bias toward basic residues; the sequence is HRSHHSIAHSIRSHHTHH.

The protein belongs to the DSH family.

The protein resides in the cytoplasm. Functionally, involved in the signal transduction pathway mediated by multiple Wnt genes. Required during ciliogenesis for the docking of basal bodies to the apical plasma membrane. The chain is Segment polarity protein dishevelled homolog DVL-3 from Xenopus tropicalis (Western clawed frog).